We begin with the raw amino-acid sequence, 431 residues long: Na(+)-translocating NADH-quinone reductase subunit F (431 aa).

Residues Ile-10–Leu-30 form a helical membrane-spanning segment. The 2Fe-2S ferredoxin-type domain maps to Cys-41–Tyr-133. Cys-76, Cys-82, Cys-85, and Cys-117 together coordinate [2Fe-2S] cluster. Residues Ala-136–Lys-286 form the FAD-binding FR-type domain. Residues Asn-289–Leu-413 form a catalytic region.

This sequence belongs to the NqrF family. As to quaternary structure, composed of six subunits; NqrA, NqrB, NqrC, NqrD, NqrE and NqrF. The cofactor is [2Fe-2S] cluster. FAD is required as a cofactor.

The protein resides in the cell inner membrane. The enzyme catalyses a ubiquinone + n Na(+)(in) + NADH + H(+) = a ubiquinol + n Na(+)(out) + NAD(+). Functionally, NQR complex catalyzes the reduction of ubiquinone-1 to ubiquinol by two successive reactions, coupled with the transport of Na(+) ions from the cytoplasm to the periplasm. The first step is catalyzed by NqrF, which accepts electrons from NADH and reduces ubiquinone-1 to ubisemiquinone by a one-electron transfer pathway. This Chlamydia trachomatis serovar D (strain ATCC VR-885 / DSM 19411 / UW-3/Cx) protein is Na(+)-translocating NADH-quinone reductase subunit F.